The chain runs to 359 residues: tRNA/tmRNA (uracil-C(5))-methyltransferase (359 aa).

S-adenosyl-L-methionine is bound by residues Gln-183, Tyr-211, Asn-216, Glu-232, and Asp-292. Catalysis depends on Cys-317, which acts as the Nucleophile. Glu-351 functions as the Proton acceptor in the catalytic mechanism.

This sequence belongs to the class I-like SAM-binding methyltransferase superfamily. RNA M5U methyltransferase family. TrmA subfamily.

The catalysed reaction is uridine(54) in tRNA + S-adenosyl-L-methionine = 5-methyluridine(54) in tRNA + S-adenosyl-L-homocysteine + H(+). It catalyses the reaction uridine(341) in tmRNA + S-adenosyl-L-methionine = 5-methyluridine(341) in tmRNA + S-adenosyl-L-homocysteine + H(+). Functionally, dual-specificity methyltransferase that catalyzes the formation of 5-methyluridine at position 54 (m5U54) in all tRNAs, and that of position 341 (m5U341) in tmRNA (transfer-mRNA). This chain is tRNA/tmRNA (uracil-C(5))-methyltransferase, found in Pseudomonas fluorescens (strain Pf0-1).